We begin with the raw amino-acid sequence, 484 residues long: Sucrose-6-phosphate hydrolase (484 aa).

Substrate-binding positions include 48-51 (LLND), Q67, 110-111 (YS), 168-169 (RD), and E223. D51 is an active-site residue.

Belongs to the glycosyl hydrolase 32 family.

Its subcellular location is the cytoplasm. The enzyme catalyses Hydrolysis of terminal non-reducing beta-D-fructofuranoside residues in beta-D-fructofuranosides.. It participates in glycan biosynthesis; sucrose metabolism. Its function is as follows. Enables the bacterium to metabolize sucrose as a sole carbon source. This is Sucrose-6-phosphate hydrolase (scrB) from Vibrio alginolyticus.